The following is a 615-amino-acid chain: Elongation factor 4 (615 aa).

The tr-type G domain occupies 17 to 198 (ASIRNFCIIA…RVSRTIPAPV (182 aa)). Residues 29 to 34 (DHGKST) and 145 to 148 (NKID) contribute to the GTP site.

Belongs to the TRAFAC class translation factor GTPase superfamily. Classic translation factor GTPase family. LepA subfamily.

The protein resides in the cell membrane. It carries out the reaction GTP + H2O = GDP + phosphate + H(+). Required for accurate and efficient protein synthesis under certain stress conditions. May act as a fidelity factor of the translation reaction, by catalyzing a one-codon backward translocation of tRNAs on improperly translocated ribosomes. Back-translocation proceeds from a post-translocation (POST) complex to a pre-translocation (PRE) complex, thus giving elongation factor G a second chance to translocate the tRNAs correctly. Binds to ribosomes in a GTP-dependent manner. The protein is Elongation factor 4 of Clavibacter sepedonicus (Clavibacter michiganensis subsp. sepedonicus).